A 132-amino-acid polypeptide reads, in one-letter code: uncharacterized protein (132 aa).

Residues 1–19 form the signal peptide; the sequence is MKKALFLVGLVFTAGVISS. A lipid anchor (N-palmitoyl cysteine) is attached at C20. A lipid anchor (S-diacylglycerol cysteine) is attached at C20.

Its subcellular location is the cell membrane. This is an uncharacterized protein from Aquifex aeolicus (strain VF5).